A 346-amino-acid polypeptide reads, in one-letter code: Methylthioribose-1-phosphate isomerase (346 aa).

Residues 46–48 (RGA), Arg-89, and Gln-196 contribute to the substrate site. The active-site Proton donor is Asp-237. 247 to 248 (NK) provides a ligand contact to substrate.

The protein belongs to the eIF-2B alpha/beta/delta subunits family. MtnA subfamily.

It catalyses the reaction 5-(methylsulfanyl)-alpha-D-ribose 1-phosphate = 5-(methylsulfanyl)-D-ribulose 1-phosphate. It functions in the pathway amino-acid biosynthesis; L-methionine biosynthesis via salvage pathway; L-methionine from S-methyl-5-thio-alpha-D-ribose 1-phosphate: step 1/6. Functionally, catalyzes the interconversion of methylthioribose-1-phosphate (MTR-1-P) into methylthioribulose-1-phosphate (MTRu-1-P). The protein is Methylthioribose-1-phosphate isomerase of Trichlorobacter lovleyi (strain ATCC BAA-1151 / DSM 17278 / SZ) (Geobacter lovleyi).